A 792-amino-acid polypeptide reads, in one-letter code: Lon protease (792 aa).

The 196-residue stretch at 16-211 (DAVVVVPVSN…KVSAFLAQRL (196 aa)) folds into the Lon N-terminal domain. 361–368 (GPPGVGKT) is a binding site for ATP. The 182-residue stretch at 597-778 (TSVPGVATGL…EDAIEAGLDP (182 aa)) folds into the Lon proteolytic domain. Active-site residues include serine 684 and lysine 727.

The protein belongs to the peptidase S16 family. As to quaternary structure, homohexamer. Organized in a ring with a central cavity.

The protein resides in the cytoplasm. The enzyme catalyses Hydrolysis of proteins in presence of ATP.. Its function is as follows. ATP-dependent serine protease that mediates the selective degradation of mutant and abnormal proteins as well as certain short-lived regulatory proteins. Required for cellular homeostasis and for survival from DNA damage and developmental changes induced by stress. Degrades polypeptides processively to yield small peptide fragments that are 5 to 10 amino acids long. Binds to DNA in a double-stranded, site-specific manner. In Phenylobacterium zucineum (strain HLK1), this protein is Lon protease.